The chain runs to 152 residues: Ribonuclease H (152 aa).

Residues 1-142 (MDSKVVIYTD…ADKLAVQGRE (142 aa)) form the RNase H type-1 domain. Positions 10, 48, 70, and 134 each coordinate Mg(2+).

This sequence belongs to the RNase H family. As to quaternary structure, monomer. Mg(2+) is required as a cofactor.

It is found in the cytoplasm. It catalyses the reaction Endonucleolytic cleavage to 5'-phosphomonoester.. Endonuclease that specifically degrades the RNA of RNA-DNA hybrids. This chain is Ribonuclease H, found in Rickettsia felis (strain ATCC VR-1525 / URRWXCal2) (Rickettsia azadi).